A 358-amino-acid chain; its full sequence is Dynein axonemal assembly factor 10 (358 aa).

WD repeat units lie at residues 64–106 (EKSK…SPVY), 116–155 (NAIDGVGGLGIGDGAPEIVTGSRDGTVKVWDSRQKDTPVV), 163–206 (ETKR…LRWE), 208–250 (NIRN…PSKG), 258–298 (AHKS…QRSK), and 320–358 (LSTQPISSLDWSPDKQGLCVCSSFDQSVRVLIVTKLNTV).

As to quaternary structure, interacts with PIH1D1; the interaction associates DNAAF10 with the R2TP complex. Interacts with several dynein axonemal assembly factors.

It is found in the dynein axonemal particle. Its function is as follows. Key assembly factor specifically required for the stability of axonemal dynein heavy chains in cytoplasm. The chain is Dynein axonemal assembly factor 10 (dnaaf10) from Danio rerio (Zebrafish).